The sequence spans 295 residues: MSASESEIQARLLAQALPYMQRYENKTIVVKYGGHAMGNPELGRAFASDIALLKQSGVNPIVVHGGGPQIGAMLNKMGIESKFEGGLRVTDEKTVEIVEMVLAGSINKEIVALINQTGEWAIGLCGKDGNMVFAEKARKTIKDPDSNIERILDLGFVGEVVEVDRTLLDLLARSEMIPVIAPVAPGRDGHTYNINADTFAGAIAGALNATRLLFLTDVPGVLDKQGNLIKELSVAQAHALIADGTISGGMIPKVETCMEAIKAGVQGVVILNGKTAHSVLLEIFTERGAGTLIVP.

Residues 66-67 (GG), Arg-88, and Asn-193 contribute to the substrate site.

It belongs to the acetylglutamate kinase family. ArgB subfamily.

The protein resides in the cytoplasm. It catalyses the reaction N-acetyl-L-glutamate + ATP = N-acetyl-L-glutamyl 5-phosphate + ADP. Its pathway is amino-acid biosynthesis; L-arginine biosynthesis; N(2)-acetyl-L-ornithine from L-glutamate: step 2/4. Its function is as follows. Catalyzes the ATP-dependent phosphorylation of N-acetyl-L-glutamate. The polypeptide is Acetylglutamate kinase (Sinorhizobium fredii (strain NBRC 101917 / NGR234)).